A 553-amino-acid chain; its full sequence is Effector protein HopAB2 (553 aa).

Disordered stretches follow at residues 1 to 123 (MAGI…APRR), 198 to 227 (AVHQ…GSSQ), and 239 to 275 (APNQ…AAMR). Residues 1-308 (MAGINRAGPS…LRTALERHVM (308 aa)) are host recognition; Pto interaction. The span at 24–39 (SGQAHGSGSGASSSNS) shows a compositional bias: low complexity. Pro residues predominate over residues 47–60 (SNTPPSNAPAPPPT). Positions 217–227 (SPAASSSGSSQ) are enriched in low complexity. A compositionally biased stretch (polar residues) spans 242-255 (QGRSSNTAASQTPV). Residues 309–553 (QRLPIPLDIG…IAKYAFRIVP (245 aa)) are E3 ubiquitin-protein ligase. Residues 325-328 (GINP) carry the Interaction with Pto-kinase motif. The disordered stretch occupies residues 361–380 (APRPAVPVAPATASRRPDGT). The tract at residues 512 to 529 (KDLAFMDMKKLAQFLAGK) is required for E3 ubiquitin-protein ligase and anti-PCD activities and pathogenesis.

It belongs to the HopAB family. As to quaternary structure, interacts physically with plant cell Pto. In terms of processing, auto-ubiquitinated.

Its subcellular location is the secreted. Effector protein involved in gene-for-gene resistance in tomato plants. It is recognized by the host Pto resistance protein and elicits Pto and Prf-dependent hypersensitive response (HR) and programmed cell death (PCD), resulting in host immunity. In susceptible plants, acts as a virulence factor by suppressing PCD and HR-based plant immunity. This function requires its E3 ubiquitin ligase activity probably by recruiting E2 enzymes and transferring ubiquitin molecules to cellular proteins involved in regulation of PCD and targeting them for degradation. Also, induces expression of host genes involved in ethylene biosynthesis and signaling, in particular ACO1 and ACO2, encoding the ethylene-forming enzyme ACC oxidase. This chain is Effector protein HopAB2 (hopAB2), found in Pseudomonas syringae pv. tomato (strain ATCC BAA-871 / DC3000).